Reading from the N-terminus, the 505-residue chain is UDP-N-acetylmuramate--L-alanine ligase (505 aa).

164 to 170 (GTHGKTT) provides a ligand contact to ATP.

The protein belongs to the MurCDEF family.

Its subcellular location is the cytoplasm. It catalyses the reaction UDP-N-acetyl-alpha-D-muramate + L-alanine + ATP = UDP-N-acetyl-alpha-D-muramoyl-L-alanine + ADP + phosphate + H(+). The protein operates within cell wall biogenesis; peptidoglycan biosynthesis. In terms of biological role, cell wall formation. The protein is UDP-N-acetylmuramate--L-alanine ligase of Synechocystis sp. (strain ATCC 27184 / PCC 6803 / Kazusa).